The primary structure comprises 86 residues: Large ribosomal subunit protein uL23 (86 aa).

Belongs to the universal ribosomal protein uL23 family. Part of the 50S ribosomal subunit. Contacts protein L29.

Functionally, binds to 23S rRNA. One of the proteins that surrounds the polypeptide exit tunnel on the outside of the ribosome. The polypeptide is Large ribosomal subunit protein uL23 (Pyrococcus furiosus (strain ATCC 43587 / DSM 3638 / JCM 8422 / Vc1)).